The primary structure comprises 715 residues: Polyribonucleotide nucleotidyltransferase (715 aa).

2 residues coordinate Mg(2+): Asp498 and Asp504. The 61-residue stretch at 565-625 folds into the KH domain; the sequence is PKVCMMQIKP…ETVKKTVAFI (61 aa). An S1 motif domain is found at 635–709; that stretch reads GTCYQASILR…RIDFLLLPKK (75 aa).

This sequence belongs to the polyribonucleotide nucleotidyltransferase family. The cofactor is Mg(2+).

Its subcellular location is the cytoplasm. It carries out the reaction RNA(n+1) + phosphate = RNA(n) + a ribonucleoside 5'-diphosphate. Functionally, involved in mRNA degradation. Catalyzes the phosphorolysis of single-stranded polyribonucleotides processively in the 3'- to 5'-direction. This chain is Polyribonucleotide nucleotidyltransferase, found in Aster yellows witches'-broom phytoplasma (strain AYWB).